The primary structure comprises 245 residues: 1-(5-phosphoribosyl)-5-[(5-phosphoribosylamino)methylideneamino] imidazole-4-carboxamide isomerase (245 aa).

D8 (proton acceptor) is an active-site residue. The active-site Proton donor is the D131.

It belongs to the HisA/HisF family.

The protein localises to the cytoplasm. The catalysed reaction is 1-(5-phospho-beta-D-ribosyl)-5-[(5-phospho-beta-D-ribosylamino)methylideneamino]imidazole-4-carboxamide = 5-[(5-phospho-1-deoxy-D-ribulos-1-ylimino)methylamino]-1-(5-phospho-beta-D-ribosyl)imidazole-4-carboxamide. The protein operates within amino-acid biosynthesis; L-histidine biosynthesis; L-histidine from 5-phospho-alpha-D-ribose 1-diphosphate: step 4/9. In Neisseria meningitidis serogroup C (strain 053442), this protein is 1-(5-phosphoribosyl)-5-[(5-phosphoribosylamino)methylideneamino] imidazole-4-carboxamide isomerase.